The primary structure comprises 68 residues: DNA-directed RNA polymerase subunit omega (68 aa).

Belongs to the RNA polymerase subunit omega family. As to quaternary structure, the RNAP catalytic core consists of 2 alpha, 1 beta, 1 beta' and 1 omega subunit. When a sigma factor is associated with the core the holoenzyme is formed, which can initiate transcription.

It catalyses the reaction RNA(n) + a ribonucleoside 5'-triphosphate = RNA(n+1) + diphosphate. Promotes RNA polymerase assembly. Latches the N- and C-terminal regions of the beta' subunit thereby facilitating its interaction with the beta and alpha subunits. The protein is DNA-directed RNA polymerase subunit omega of Syntrophotalea carbinolica (strain DSM 2380 / NBRC 103641 / GraBd1) (Pelobacter carbinolicus).